A 350-amino-acid polypeptide reads, in one-letter code: tRNA dimethylallyltransferase (350 aa).

34 to 41 (GPTASGKT) provides a ligand contact to ATP. 36-41 (TASGKT) is a binding site for substrate. 3 interaction with substrate tRNA regions span residues 63–66 (DSAL), 187–191 (QRIQR), and 274–279 (RCVGYR).

It belongs to the IPP transferase family. As to quaternary structure, monomer. Requires Mg(2+) as cofactor.

It carries out the reaction adenosine(37) in tRNA + dimethylallyl diphosphate = N(6)-dimethylallyladenosine(37) in tRNA + diphosphate. In terms of biological role, catalyzes the transfer of a dimethylallyl group onto the adenine at position 37 in tRNAs that read codons beginning with uridine, leading to the formation of N6-(dimethylallyl)adenosine (i(6)A). The protein is tRNA dimethylallyltransferase of Paracidovorax citrulli (strain AAC00-1) (Acidovorax citrulli).